The primary structure comprises 436 residues: Phosphoribosylamine--glycine ligase (436 aa).

The 213-residue stretch at 106-318 (RKLFEDYDIE…LADVCQAIVD (213 aa)) folds into the ATP-grasp domain. Residue 133-196 (LDDFDRDVVV…EERLIGEEFT (64 aa)) participates in ATP binding. Gln-276, Glu-288, and Asn-290 together coordinate Mg(2+). 3 residues coordinate Mn(2+): Gln-276, Glu-288, and Asn-290.

It belongs to the GARS family. The cofactor is Mg(2+). It depends on Mn(2+) as a cofactor.

It carries out the reaction 5-phospho-beta-D-ribosylamine + glycine + ATP = N(1)-(5-phospho-beta-D-ribosyl)glycinamide + ADP + phosphate + H(+). The protein operates within purine metabolism; IMP biosynthesis via de novo pathway; N(1)-(5-phospho-D-ribosyl)glycinamide from 5-phospho-alpha-D-ribose 1-diphosphate: step 2/2. This Methanobrevibacter smithii (strain ATCC 35061 / DSM 861 / OCM 144 / PS) protein is Phosphoribosylamine--glycine ligase.